We begin with the raw amino-acid sequence, 427 residues long: Serine hydroxymethyltransferase (427 aa).

Residues Leu118 and 122–124 (GHL) each bind (6S)-5,6,7,8-tetrahydrofolate. N6-(pyridoxal phosphate)lysine is present on Lys227. (6S)-5,6,7,8-tetrahydrofolate-binding positions include Glu243 and 351-353 (SPF).

The protein belongs to the SHMT family. Homodimer. The cofactor is pyridoxal 5'-phosphate.

The protein localises to the cytoplasm. The catalysed reaction is (6R)-5,10-methylene-5,6,7,8-tetrahydrofolate + glycine + H2O = (6S)-5,6,7,8-tetrahydrofolate + L-serine. It functions in the pathway one-carbon metabolism; tetrahydrofolate interconversion. The protein operates within amino-acid biosynthesis; glycine biosynthesis; glycine from L-serine: step 1/1. Functionally, catalyzes the reversible interconversion of serine and glycine with tetrahydrofolate (THF) serving as the one-carbon carrier. This reaction serves as the major source of one-carbon groups required for the biosynthesis of purines, thymidylate, methionine, and other important biomolecules. Also exhibits THF-independent aldolase activity toward beta-hydroxyamino acids, producing glycine and aldehydes, via a retro-aldol mechanism. The polypeptide is Serine hydroxymethyltransferase (Thermotoga neapolitana (strain ATCC 49049 / DSM 4359 / NBRC 107923 / NS-E)).